A 1079-amino-acid chain; its full sequence is Lon protease homolog, mitochondrial (1079 aa).

The transit peptide at 1 to 60 (MLRPRTYVRKLAWRCPRKSQLGLRLATSVSSHKSLPLPMNFDISHSQSAFRAYQDIIHRN) directs the protein to the mitochondrion. Positions 61–116 (KSVGDDEPSQRSENENNPSESDKDSNQDPETPKKDKESENDKEPEKEKDIENDNKV) are enriched in basic and acidic residues. Disordered stretches follow at residues 61–158 (KSVG…VDPV) and 262–285 (LTTP…ESFP). Positions 117 to 131 (SSESNENVTLASSNT) are enriched in polar residues. The span at 132–143 (GGAAPPNGNNNG) shows a compositional bias: low complexity. Residues 165–391 (LLAIPMKDRP…RALELLKVEL (227 aa)) form the Lon N-terminal domain. Basic and acidic residues predominate over residues 262–281 (LTTPSSEKEAKSEEPSKEDA). 543–550 (GPPGTGKT) provides a ligand contact to ATP. Positions 756–765 (ALDSSKEKEG) are enriched in basic and acidic residues. The segment at 756-832 (ALDSSKEKEG…SEEDQQPEPK (77 aa)) is disordered. Residues 768–779 (ASSEEANVNSES) show a composition bias toward low complexity. Positions 780-802 (TKSNTSQAEPVAESSTDISTKSK) are enriched in polar residues. Residues 803–818 (VASEKIETKEKKETNK) show a composition bias toward basic and acidic residues. The Lon proteolytic domain maps to 865–1053 (FPPPGVATGL…QEVFDKIFPN (189 aa)). Active-site residues include serine 959 and lysine 1002.

It belongs to the peptidase S16 family. In terms of assembly, homohexamer or homoheptamer. Organized in a ring with a central cavity.

The protein resides in the mitochondrion matrix. The enzyme catalyses Hydrolysis of proteins in presence of ATP.. In terms of biological role, ATP-dependent serine protease that mediates the selective degradation of misfolded, unassembled or oxidatively damaged polypeptides as well as certain short-lived regulatory proteins in the mitochondrial matrix. May also have a chaperone function in the assembly of inner membrane protein complexes. Participates in the regulation of mitochondrial gene expression and in the maintenance of the integrity of the mitochondrial genome. Binds to mitochondrial DNA in a site-specific manner. The sequence is that of Lon protease homolog, mitochondrial from Debaryomyces hansenii (strain ATCC 36239 / CBS 767 / BCRC 21394 / JCM 1990 / NBRC 0083 / IGC 2968) (Yeast).